The primary structure comprises 202 residues: Large ribosomal subunit protein bL25 (202 aa).

Belongs to the bacterial ribosomal protein bL25 family. CTC subfamily. As to quaternary structure, part of the 50S ribosomal subunit; part of the 5S rRNA/L5/L18/L25 subcomplex. Contacts the 5S rRNA. Binds to the 5S rRNA independently of L5 and L18.

In terms of biological role, this is one of the proteins that binds to the 5S RNA in the ribosome where it forms part of the central protuberance. The polypeptide is Large ribosomal subunit protein bL25 (Methylococcus capsulatus (strain ATCC 33009 / NCIMB 11132 / Bath)).